The primary structure comprises 776 residues: MKEYYTISEKKLPIIALRGLWLFPNNIQHFEVGREVSLNALNASLLRNSEIFICTQKDPMLENITKEDFYHTGVLASIKQTIKMPNGNIRVLVEAYDRAKIVDFVENDSFLEANVEVMEYDKTKYHPTDKSLTMIRMIISSFESLAEIIKKPLPQDLLGGLLNEEDPSSLIDTIAMLISLNDKDSILLLETLDMDERIELVYKFVIKEIEFLKIKEDIEERTNKEISDTQKEYFLQEQLRQIKMELGEEYDIEDTDDYANRVKKLKLKKDSEEHVLKEINRLSSMNPNNPESTVIRNYIDQVLDIPWNKKSKSSIDLKVAEKVLNDGHFGLEDVKKRILEYLAVKKMTGSLKGPILCLVGPPGVGKTSIARSIADATNRKFVSMRLGGVRDEAEIRGHRKTYIGAMPGRIITQLQKAKKLNPVFLLDEIDKLASDFRGDPASALLEVLDPEQNSEFTDNYIEIPVDLSDVLFITTANSQEQIPDALLDRMEVIRVTSYTDSEKFEIANRYLLPRQLKENGMDKSQFHITRDAIYTIINNYTRESGVRELERNIGKVIRKAVVKIVKDDVKKVVVNNKNLEKFLGSKLVLDDEIPREDTVGVVNGLAWTQVGGVILTIEANVMDGSGKTQLTGKLGDVMKESAMAAISYIRSNQEALGIKGEFYKEKDIHIHVPEGAVPKDGPSAGVTMVTALVSALTGRKVKHDFAMTGEITLTGRVLAIGGVKEKVLAAHRYGINKVFLPKENKRDIQDIDPKIRQKIKFYFTSNVKEILDEVLI.

Residues L12–I209 enclose the Lon N-terminal domain. An ATP-binding site is contributed by G360 to T367. Residues E596 to I776 form the Lon proteolytic domain. Catalysis depends on residues S683 and K726.

Belongs to the peptidase S16 family. Homohexamer. Organized in a ring with a central cavity.

It localises to the cytoplasm. It carries out the reaction Hydrolysis of proteins in presence of ATP.. In terms of biological role, ATP-dependent serine protease that mediates the selective degradation of mutant and abnormal proteins as well as certain short-lived regulatory proteins. Required for cellular homeostasis and for survival from DNA damage and developmental changes induced by stress. Degrades polypeptides processively to yield small peptide fragments that are 5 to 10 amino acids long. Binds to DNA in a double-stranded, site-specific manner. The chain is Lon protease from Finegoldia magna (strain ATCC 29328 / DSM 20472 / WAL 2508) (Peptostreptococcus magnus).